Reading from the N-terminus, the 469-residue chain is Protein RUFY3 (469 aa).

Phosphothreonine occurs at positions 5 and 12. Ser-34 and Ser-49 each carry phosphoserine. Residue Thr-51 is modified to Phosphothreonine. The region spanning 95–227 (DSDYAPLQQF…IDANFCMKGE (133 aa)) is the RUN domain. 2 coiled-coil regions span residues 271–362 (NRHL…VEKE) and 422–463 (KSEL…AANK).

Interacts with PAK1. Interacts (via C-terminus) with Ras-related Rab-5 proteins. Interacts (via C-terminus) with Ras-related Rap-2 proteins. Interacts with PIK3CA and PIK3R1. Interacts (via N-terminus) with FSCN1; this interaction induces neuron axon development. Interacts with DBN1. Interacts (via the second coiled coil) with GTP-, but not GDP-bound ARL8A and ARL8B. Interacts with dynactin/DCTN1 and the dynein intermediate chain DYNC1I1/2. Directly interacts with DYNC1LI1. In terms of processing, phosphorylated by PAK1.

It localises to the cytoplasm. The protein resides in the endomembrane system. The protein localises to the cell projection. It is found in the invadopodium. Its subcellular location is the growth cone. It localises to the perikaryon. The protein resides in the filopodium. The protein localises to the lamellipodium. It is found in the lysosome. Its function is as follows. ARL8 effector that promotes the coupling of endolysosomes to dynein-dynactin for retrograde transport along microtubules. Acts by binding both GTP-bound ARL8 and dynein-dynactin. In nonneuronal cells, promotes concentration of endolysosomes in the juxtanuclear area. In hippocampal neurons, drives retrograde transport of endolysosomes from the axon to the soma. Plays a role in the generation of neuronal polarity formation and axon growth. Implicated in the formation of a single axon by developing neurons. May inhibit the formation of additional axons by inhibition of PI3K in minor neuronal processes. Plays a role in the formation of F-actin-enriched protrusive structures at the cell periphery. Plays a role in cytoskeletal organization by regulating the subcellular localization of FSCN1 and DBN1 at axonal growth cones. This chain is Protein RUFY3, found in Pongo abelii (Sumatran orangutan).